The chain runs to 230 residues: Demethylmenaquinone methyltransferase (230 aa).

Residues threonine 62, aspartate 80, 100–101 (DA), and serine 117 contribute to the S-adenosyl-L-methionine site.

It belongs to the class I-like SAM-binding methyltransferase superfamily. MenG/UbiE family.

It carries out the reaction a 2-demethylmenaquinol + S-adenosyl-L-methionine = a menaquinol + S-adenosyl-L-homocysteine + H(+). It participates in quinol/quinone metabolism; menaquinone biosynthesis; menaquinol from 1,4-dihydroxy-2-naphthoate: step 2/2. In terms of biological role, methyltransferase required for the conversion of demethylmenaquinol (DMKH2) to menaquinol (MKH2). The chain is Demethylmenaquinone methyltransferase from Mycobacterium sp. (strain KMS).